The sequence spans 331 residues: Ketol-acid reductoisomerase (NADP(+)) (331 aa).

The KARI N-terminal Rossmann domain maps to 2 to 182 (ARMYYDQDAN…GGTRAGILET (181 aa)). NADP(+)-binding positions include 25-28 (YGSQ), Ser51, Ser53, and 83-86 (DEVQ). His108 is a catalytic residue. Gly134 lines the NADP(+) pocket. Positions 183 to 328 (TFREETETDL…KDLRAMFSWL (146 aa)) constitute a KARI C-terminal knotted domain. Asp191, Glu195, Glu227, and Glu231 together coordinate Mg(2+). Residue Ser252 coordinates substrate.

The protein belongs to the ketol-acid reductoisomerase family. As to quaternary structure, homooctamer. Mg(2+) is required as a cofactor.

The catalysed reaction is (2R)-2,3-dihydroxy-3-methylbutanoate + NADP(+) = (2S)-2-acetolactate + NADPH + H(+). The enzyme catalyses (2R,3R)-2,3-dihydroxy-3-methylpentanoate + NADP(+) = (S)-2-ethyl-2-hydroxy-3-oxobutanoate + NADPH + H(+). Its pathway is amino-acid biosynthesis; L-isoleucine biosynthesis; L-isoleucine from 2-oxobutanoate: step 2/4. The protein operates within amino-acid biosynthesis; L-valine biosynthesis; L-valine from pyruvate: step 2/4. In terms of biological role, involved in the biosynthesis of branched-chain amino acids (BCAA). Catalyzes an alkyl-migration followed by a ketol-acid reduction of (S)-2-acetolactate (S2AL) to yield (R)-2,3-dihydroxy-isovalerate. In the isomerase reaction, S2AL is rearranged via a Mg-dependent methyl migration to produce 3-hydroxy-3-methyl-2-ketobutyrate (HMKB). In the reductase reaction, this 2-ketoacid undergoes a metal-dependent reduction by NADPH to yield (R)-2,3-dihydroxy-isovalerate. This Synechocystis sp. (strain ATCC 27184 / PCC 6803 / Kazusa) protein is Ketol-acid reductoisomerase (NADP(+)).